The following is a 120-amino-acid chain: Ribonuclease P protein component 4 (120 aa).

The Zn(2+) site is built by C67, C70, C96, and C99.

This sequence belongs to the eukaryotic/archaeal RNase P protein component 4 family. Consists of a catalytic RNA component and at least 4-5 protein subunits. It depends on Zn(2+) as a cofactor.

Its subcellular location is the cytoplasm. The catalysed reaction is Endonucleolytic cleavage of RNA, removing 5'-extranucleotides from tRNA precursor.. In terms of biological role, part of ribonuclease P, a protein complex that generates mature tRNA molecules by cleaving their 5'-ends. The protein is Ribonuclease P protein component 4 of Thermococcus sibiricus (strain DSM 12597 / MM 739).